Reading from the N-terminus, the 465-residue chain is ATP synthase subunit beta (465 aa).

ATP is bound at residue 152 to 159 (GGAGVGKT).

This sequence belongs to the ATPase alpha/beta chains family. F-type ATPases have 2 components, CF(1) - the catalytic core - and CF(0) - the membrane proton channel. CF(1) has five subunits: alpha(3), beta(3), gamma(1), delta(1), epsilon(1). CF(0) has three main subunits: a(1), b(2) and c(9-12). The alpha and beta chains form an alternating ring which encloses part of the gamma chain. CF(1) is attached to CF(0) by a central stalk formed by the gamma and epsilon chains, while a peripheral stalk is formed by the delta and b chains.

The protein resides in the cell inner membrane. It carries out the reaction ATP + H2O + 4 H(+)(in) = ADP + phosphate + 5 H(+)(out). In terms of biological role, produces ATP from ADP in the presence of a proton gradient across the membrane. The catalytic sites are hosted primarily by the beta subunits. This Campylobacter curvus (strain 525.92) protein is ATP synthase subunit beta.